The primary structure comprises 213 residues: Bcl-2-related ovarian killer protein (213 aa).

The BH4 motif lies at 32–44; the sequence is KALCRDYINSRLI. The short motif at 67–83 is the BH3 element; that stretch reads VSAILLRLGDELEYIRP. A BH1 motif is present at residues 113–132; sequence QIFTAGITWGKVVSLYAVAA. The BH2 motif lies at 165–179; that stretch reads WLKRRGGWADITKCV. Residues 190–210 traverse the membrane as a helical segment; that stretch reads WLVAAVCSFGHFLKAIFFVLL.

The protein belongs to the Bcl-2 family.

It is found in the membrane. May play a role in apoptosis. In Gallus gallus (Chicken), this protein is Bcl-2-related ovarian killer protein.